The primary structure comprises 129 residues: Protein FYV12 (129 aa).

Asparagine 91 is a glycosylation site (N-linked (GlcNAc...) asparagine). Residues 109–128 (LMTTFLLYVLYVCIYISAFI) form a helical membrane-spanning segment.

The protein resides in the membrane. Functionally, involved in K1 killer toxin resistance. The protein is Protein FYV12 (FYV12) of Saccharomyces cerevisiae (strain ATCC 204508 / S288c) (Baker's yeast).